A 479-amino-acid chain; its full sequence is Glycogen synthase (479 aa).

ADP-alpha-D-glucose is bound at residue lysine 15.

Belongs to the glycosyltransferase 1 family. Bacterial/plant glycogen synthase subfamily.

The enzyme catalyses [(1-&gt;4)-alpha-D-glucosyl](n) + ADP-alpha-D-glucose = [(1-&gt;4)-alpha-D-glucosyl](n+1) + ADP + H(+). It participates in glycan biosynthesis; glycogen biosynthesis. In terms of biological role, synthesizes alpha-1,4-glucan chains using ADP-glucose. The chain is Glycogen synthase from Pectobacterium carotovorum subsp. carotovorum (strain PC1).